The following is a 440-amino-acid chain: Actin-like protein 7A (440 aa).

Residues 1-29 are disordered; sequence MSLDGVWAPQTANIGDGPAKKASDQASMQ. Positions 36-56 are required for interaction with TES; the sequence is ASLKDGPAKRAVWVRRDNAET.

Belongs to the actin family. In terms of assembly, interacts (via N-terminus) with TES (via LIM domain 2). Heterodimer with TES; the heterodimer interacts with ENAH to form a heterotrimer. Interacts with ACTL9. Interacts with CYLC1; the interaction may be relevant for proper acrosome attachment to the nuclear envelope. As to expression, detected in testis. Detected at the acrosome of round spermatids (at protein level). Detected in adult and embryonic testis. Detected in developing male germ cells.

It localises to the cytoplasm. The protein resides in the cytoskeleton. It is found in the golgi apparatus. Its subcellular location is the nucleus. The protein localises to the cytoplasmic vesicle. It localises to the secretory vesicle. The protein resides in the acrosome. Its function is as follows. Essential for normal spermatogenesis and male fertility. Required for normal sperm head morphology, acroplaxome formation, acrosome attachment, and acrosome granule stability. May anchor and stabilize acrosomal adherence to the acroplaxome at least in part by facilitating the presence of F-actin in the subacrosomal space. May play an important role in formation and fusion of Golgi-derived vesicles during acrosome biogenesis. The sequence is that of Actin-like protein 7A (Actl7a) from Mus musculus (Mouse).